A 204-amino-acid chain; its full sequence is B9 domain-containing protein 1 (204 aa).

The region spanning 9 to 127 is the C2 B9-type domain; it reads FLLMITGQVE…TIPMFVPEST (119 aa).

It belongs to the B9D family. In terms of assembly, part of the tectonic-like complex (also named B9 complex).

It localises to the cytoplasm. The protein resides in the cytoskeleton. Its subcellular location is the cilium basal body. In terms of biological role, component of the tectonic-like complex, a complex localized at the transition zone of primary cilia and acting as a barrier that prevents diffusion of transmembrane proteins between the cilia and plasma membranes. Required for ciliogenesis and sonic hedgehog/SHH signaling. This is B9 domain-containing protein 1 (B9d1) from Mus musculus (Mouse).